A 305-amino-acid chain; its full sequence is Dermonecrotic toxin LrSicTox-alphaIA1ii (305 aa).

Positions 1–18 (MLLYVTLILGCWSAFSES) are cleaved as a signal peptide. A propeptide spanning residues 19–26 (AETDVAER) is cleaved from the precursor. H37 is an active-site residue. Positions 57 and 59 each coordinate Mg(2+). H73 acts as the Nucleophile in catalysis. Intrachain disulfides connect C77–C83 and C79–C222. D117 contributes to the Mg(2+) binding site. An N-linked (GlcNAc...) asparagine glycan is attached at N282.

It belongs to the arthropod phospholipase D family. Class II subfamily. Class IIa sub-subfamily. It depends on Mg(2+) as a cofactor. As to expression, expressed by the venom gland.

The protein localises to the secreted. It carries out the reaction an N-(acyl)-sphingosylphosphocholine = an N-(acyl)-sphingosyl-1,3-cyclic phosphate + choline. The enzyme catalyses an N-(acyl)-sphingosylphosphoethanolamine = an N-(acyl)-sphingosyl-1,3-cyclic phosphate + ethanolamine. The catalysed reaction is a 1-acyl-sn-glycero-3-phosphocholine = a 1-acyl-sn-glycero-2,3-cyclic phosphate + choline. It catalyses the reaction a 1-acyl-sn-glycero-3-phosphoethanolamine = a 1-acyl-sn-glycero-2,3-cyclic phosphate + ethanolamine. Inhibited with low affinity by edelfosine. Dermonecrotic toxins cleave the phosphodiester linkage between the phosphate and headgroup of certain phospholipids (sphingolipid and lysolipid substrates), forming an alcohol (often choline) and a cyclic phosphate. This toxin acts on sphingomyelin (SM). It also acts on a broad range of lysophospholipids, like lysophosphatidylinositol (LPI), lysophosphatidylglycerol (LPG), lysophosphatidylethanolamine (LPE), lysobisphosphatidic acid (LBPA), lysophosphatidylserine (LPS) and lysophosphatidylcholines (LPC) of varying chain lengths. The substrate preference is LPI &gt; LPG &gt; LPS &gt; LPC &gt;&gt; LPE, LBPA. Furthermore, the enzyme also act on cyclic phosphatidic acid and lyso-platelet activating factor (LPAF, an alkyl-LPC). The enzyme does not act on sphingosylphosphorylcholine (SPC, also known as lyso-sphingomyelin) and PAF. The toxin may also act on ceramide phosphoethanolamine (CPE). It acts by transphosphatidylation, releasing exclusively cyclic phosphate products as second products. It does not exhibit detectable PLA1/2 activity. It induces dose-dependent hemolysis and dermonecrosis. Also induces increased vascular permeability, edema, inflammatory response, and platelet aggregation. The chain is Dermonecrotic toxin LrSicTox-alphaIA1ii from Loxosceles reclusa (Brown recluse spider).